Consider the following 248-residue polypeptide: Triosephosphate isomerase (248 aa).

Residues Asn10 and Lys12 each contribute to the substrate site. The active-site Electrophile is His95. Residue Glu165 is the Proton acceptor of the active site.

This sequence belongs to the triosephosphate isomerase family. In terms of assembly, homodimer.

It carries out the reaction D-glyceraldehyde 3-phosphate = dihydroxyacetone phosphate. It functions in the pathway carbohydrate biosynthesis; gluconeogenesis. Its pathway is carbohydrate degradation; glycolysis; D-glyceraldehyde 3-phosphate from glycerone phosphate: step 1/1. The chain is Triosephosphate isomerase (TPI1) from Kluyveromyces lactis (strain ATCC 8585 / CBS 2359 / DSM 70799 / NBRC 1267 / NRRL Y-1140 / WM37) (Yeast).